The sequence spans 385 residues: Nonsense-mediated mRNA decay factor SMG9 (385 aa).

The tract at residues 1–32 (MKKVEILKTSRPSSAGGAARPSTASPTHGAPK) is disordered.

The protein belongs to the SMG9 family.

Its function is as follows. Involved in nonsense-mediated decay (NMD) of mRNAs containing premature stop codons. Probable component of kinase complex containing smg-1 and recruited to stalled ribosomes. This is Nonsense-mediated mRNA decay factor SMG9 (smg-9) from Caenorhabditis elegans.